A 422-amino-acid chain; its full sequence is GTPase Obg (422 aa).

Positions 1 to 158 constitute an Obg domain; the sequence is MFYDRARIFV…RWLDLELKLL (158 aa). The OBG-type G domain occupies 159–329; sequence ADVGLVGFPN…LVYRVSALLE (171 aa). Residues 165–172, 190–194, 212–215, 282–285, and 310–312 contribute to the GTP site; these read GFPNAGKS, FTTIT, DIPG, NKMD, and SAV. Positions 172 and 192 each coordinate Mg(2+). One can recognise an OCT domain in the interval 337–422; sequence VPEALERPVI…IGDYEFEYVE (86 aa).

The protein belongs to the TRAFAC class OBG-HflX-like GTPase superfamily. OBG GTPase family. Monomer. Requires Mg(2+) as cofactor.

It is found in the cytoplasm. Its function is as follows. An essential GTPase which binds GTP, GDP and possibly (p)ppGpp with moderate affinity, with high nucleotide exchange rates and a fairly low GTP hydrolysis rate. Plays a role in control of the cell cycle, stress response, ribosome biogenesis and in those bacteria that undergo differentiation, in morphogenesis control. This chain is GTPase Obg, found in Pelotomaculum thermopropionicum (strain DSM 13744 / JCM 10971 / SI).